Consider the following 253-residue polypeptide: tRNA-cytidine(32) 2-sulfurtransferase 2 (253 aa).

A PP-loop motif motif is present at residues 33–38; sequence SGGKDS. Residues Cys-108, Cys-111, and Cys-199 each coordinate [4Fe-4S] cluster.

This sequence belongs to the TtcA family. In terms of assembly, homodimer. Requires Mg(2+) as cofactor. The cofactor is [4Fe-4S] cluster.

It is found in the cytoplasm. It catalyses the reaction cytidine(32) in tRNA + S-sulfanyl-L-cysteinyl-[cysteine desulfurase] + AH2 + ATP = 2-thiocytidine(32) in tRNA + L-cysteinyl-[cysteine desulfurase] + A + AMP + diphosphate + H(+). It functions in the pathway tRNA modification. Its function is as follows. Catalyzes the ATP-dependent 2-thiolation of cytidine in position 32 of tRNA, to form 2-thiocytidine (s(2)C32). The sulfur atoms are provided by the cysteine/cysteine desulfurase (IscS) system. The protein is tRNA-cytidine(32) 2-sulfurtransferase 2 of Francisella tularensis subsp. novicida (strain U112).